The primary structure comprises 508 residues: Photosystem II CP47 reaction center protein (508 aa).

6 helical membrane-spanning segments follow: residues 21–36, 101–115, 140–156, 203–218, 237–252, and 457–472; these read SVHIMHTALVAGWAGS, IVFSGLCFLAAIWHW, GIHLFLSGVACFGFGAF, IAAGTLGILAGLFHLS, VLSSSIAAVFFAAFVV, and SFALLFFFGHIWHGAR.

It belongs to the PsbB/PsbC family. PsbB subfamily. PSII is composed of 1 copy each of membrane proteins PsbA, PsbB, PsbC, PsbD, PsbE, PsbF, PsbH, PsbI, PsbJ, PsbK, PsbL, PsbM, PsbT, PsbX, PsbY, PsbZ, Psb30/Ycf12, at least 3 peripheral proteins of the oxygen-evolving complex and a large number of cofactors. It forms dimeric complexes. It depends on Binds multiple chlorophylls. PSII binds additional chlorophylls, carotenoids and specific lipids. as a cofactor.

It localises to the plastid. It is found in the chloroplast thylakoid membrane. Functionally, one of the components of the core complex of photosystem II (PSII). It binds chlorophyll and helps catalyze the primary light-induced photochemical processes of PSII. PSII is a light-driven water:plastoquinone oxidoreductase, using light energy to abstract electrons from H(2)O, generating O(2) and a proton gradient subsequently used for ATP formation. This Nasturtium officinale (Watercress) protein is Photosystem II CP47 reaction center protein.